The sequence spans 89 residues: Putative regulatory protein CPE1749 (89 aa).

The protein belongs to the RemA family.

The protein is Putative regulatory protein CPE1749 of Clostridium perfringens (strain 13 / Type A).